The primary structure comprises 191 residues: Fe/S biogenesis protein NfuA (191 aa).

Residues cysteine 149 and cysteine 152 each coordinate [4Fe-4S] cluster.

The protein belongs to the NfuA family. In terms of assembly, homodimer. [4Fe-4S] cluster is required as a cofactor.

Functionally, involved in iron-sulfur cluster biogenesis. Binds a 4Fe-4S cluster, can transfer this cluster to apoproteins, and thereby intervenes in the maturation of Fe/S proteins. Could also act as a scaffold/chaperone for damaged Fe/S proteins. The sequence is that of Fe/S biogenesis protein NfuA from Photorhabdus laumondii subsp. laumondii (strain DSM 15139 / CIP 105565 / TT01) (Photorhabdus luminescens subsp. laumondii).